Reading from the N-terminus, the 423-residue chain is Imidazolonepropionase (423 aa).

Fe(3+) contacts are provided by histidine 87 and histidine 89. Zn(2+)-binding residues include histidine 87 and histidine 89. Positions 96, 159, and 192 each coordinate 4-imidazolone-5-propanoate. Tyrosine 159 provides a ligand contact to N-formimidoyl-L-glutamate. Position 257 (histidine 257) interacts with Fe(3+). Histidine 257 lines the Zn(2+) pocket. Glutamate 260 contacts 4-imidazolone-5-propanoate. A Fe(3+)-binding site is contributed by aspartate 331. Aspartate 331 contributes to the Zn(2+) binding site. N-formimidoyl-L-glutamate contacts are provided by asparagine 333 and glycine 335. A 4-imidazolone-5-propanoate-binding site is contributed by serine 336.

Belongs to the metallo-dependent hydrolases superfamily. HutI family. Zn(2+) is required as a cofactor. It depends on Fe(3+) as a cofactor.

It is found in the cytoplasm. It catalyses the reaction 4-imidazolone-5-propanoate + H2O = N-formimidoyl-L-glutamate. It participates in amino-acid degradation; L-histidine degradation into L-glutamate; N-formimidoyl-L-glutamate from L-histidine: step 3/3. In terms of biological role, catalyzes the hydrolytic cleavage of the carbon-nitrogen bond in imidazolone-5-propanoate to yield N-formimidoyl-L-glutamate. It is the third step in the universal histidine degradation pathway. The protein is Imidazolonepropionase of Porphyromonas gingivalis (strain ATCC 33277 / DSM 20709 / CIP 103683 / JCM 12257 / NCTC 11834 / 2561).